Here is a 388-residue protein sequence, read N- to C-terminus: D-alanyl-D-alanine carboxypeptidase DacD (388 aa).

The first 21 residues, 1 to 21, serve as a signal peptide directing secretion; the sequence is MKRRLIIAASLFVFNLSSGFA. S63 functions as the Acyl-ester intermediate in the catalytic mechanism. The active-site Proton acceptor is the K66. Residue S129 is part of the active site. K232 lines the substrate pocket.

This sequence belongs to the peptidase S11 family.

The protein localises to the cell inner membrane. The enzyme catalyses Preferential cleavage: (Ac)2-L-Lys-D-Ala-|-D-Ala. Also transpeptidation of peptidyl-alanyl moieties that are N-acyl substituents of D-alanine.. It participates in cell wall biogenesis; peptidoglycan biosynthesis. Removes C-terminal D-alanyl residues from sugar-peptide cell wall precursors. This Escherichia coli (strain K12) protein is D-alanyl-D-alanine carboxypeptidase DacD (dacD).